Consider the following 158-residue polypeptide: Superoxide dismutase [Cu-Zn] (158 aa).

Cu cation is bound by residues H46, H48, and H63. Residues C57 and C149 are joined by a disulfide bond. Zn(2+) is bound by residues H63, H71, H80, and D83. H120 contacts Cu cation.

Belongs to the Cu-Zn superoxide dismutase family. As to quaternary structure, homodimer. Cu cation is required as a cofactor. The cofactor is Zn(2+).

The protein localises to the cytoplasm. The catalysed reaction is 2 superoxide + 2 H(+) = H2O2 + O2. Its function is as follows. Destroys radicals which are normally produced within the cells and which are toxic to biological systems. The protein is Superoxide dismutase [Cu-Zn] (sod-1) of Onchocerca volvulus.